We begin with the raw amino-acid sequence, 155 residues long: Small ribosomal subunit protein uS7 (155 aa).

It belongs to the universal ribosomal protein uS7 family. As to quaternary structure, part of the 30S ribosomal subunit. Contacts proteins S9 and S11.

One of the primary rRNA binding proteins, it binds directly to 16S rRNA where it nucleates assembly of the head domain of the 30S subunit. Is located at the subunit interface close to the decoding center, probably blocks exit of the E-site tRNA. This is Small ribosomal subunit protein uS7 from Thermosipho africanus (strain TCF52B).